Reading from the N-terminus, the 298-residue chain is Single myb histone 2 (298 aa).

The HTH myb-type domain occupies 1 to 61 (MGVPKQRWTP…KWRNLSVTAG (61 aa)). A DNA-binding region (H-T-H motif) is located at residues 28 to 57 (WRTILRDSDFSALLRLRSNVDLKDKWRNLS). The region spanning 124–192 (SVARLDDLIV…KVNQKYRIAP (69 aa)) is the H15 domain. Positions 237–278 (EEAAAFAAKAVAEAEVAMAEAEEAARVAEAAENDAEAAKAFL) form a coiled coil.

This sequence belongs to the histone H1/H5 family. SMH subfamily. In terms of assembly, forms a homodimer and heterodimers.

The protein localises to the nucleus. It is found in the chromosome. Its subcellular location is the nucleolus. It localises to the telomere. Binds preferentially double-stranded telomeric repeats, but may also bind to the single telomeric strand. This is Single myb histone 2 (SMH2) from Zea mays (Maize).